The sequence spans 353 residues: UDP-N-acetylglucosamine--N-acetylmuramyl-(pentapeptide) pyrophosphoryl-undecaprenol N-acetylglucosamine transferase (353 aa).

Residues 10-12 (TGG), Asn-124, Ser-183, and Gln-283 each bind UDP-N-acetyl-alpha-D-glucosamine.

This sequence belongs to the glycosyltransferase 28 family. MurG subfamily.

It localises to the cell inner membrane. The catalysed reaction is di-trans,octa-cis-undecaprenyl diphospho-N-acetyl-alpha-D-muramoyl-L-alanyl-D-glutamyl-meso-2,6-diaminopimeloyl-D-alanyl-D-alanine + UDP-N-acetyl-alpha-D-glucosamine = di-trans,octa-cis-undecaprenyl diphospho-[N-acetyl-alpha-D-glucosaminyl-(1-&gt;4)]-N-acetyl-alpha-D-muramoyl-L-alanyl-D-glutamyl-meso-2,6-diaminopimeloyl-D-alanyl-D-alanine + UDP + H(+). Its pathway is cell wall biogenesis; peptidoglycan biosynthesis. Functionally, cell wall formation. Catalyzes the transfer of a GlcNAc subunit on undecaprenyl-pyrophosphoryl-MurNAc-pentapeptide (lipid intermediate I) to form undecaprenyl-pyrophosphoryl-MurNAc-(pentapeptide)GlcNAc (lipid intermediate II). The sequence is that of UDP-N-acetylglucosamine--N-acetylmuramyl-(pentapeptide) pyrophosphoryl-undecaprenol N-acetylglucosamine transferase from Helicobacter pylori (strain Shi470).